The chain runs to 118 residues: UPF0102 protein Lxx14785 (118 aa).

Belongs to the UPF0102 family.

The protein is UPF0102 protein Lxx14785 of Leifsonia xyli subsp. xyli (strain CTCB07).